The chain runs to 33 residues: Unknown 31.6 kDa protein from 2D-PAGE (33 aa).

In Onion yellows phytoplasma, this protein is Unknown 31.6 kDa protein from 2D-PAGE.